Consider the following 290-residue polypeptide: 2-hydroxy-6-oxo-6-(2'-aminophenyl)hexa-2,4-dienoic acid hydrolase (290 aa).

Active-site residues include Ser114, Asp233, and His261.

Belongs to the DmpD/TodF/XylF esterase family. In terms of assembly, homodimer.

It carries out the reaction (2E,4E)-6-(2-aminophenyl)-2-hydroxy-6-oxohexa-2,4-dienoate + H2O = (2E)-2-hydroxypenta-2,4-dienoate + anthranilate + H(+). It functions in the pathway xenobiotic degradation; carbazole degradation. In terms of biological role, involved in the degradation of carbazole, a toxic N-heterocyclic aromatic compound containing dibenzopyrrole system. Catalyzes the hydrolytic cleavage of a carbon-carbon bond of 2-hydroxy-6-oxo-6-(2'-aminophenyl)hexa-2,4-dienoic acid (HOPDA) to yield anthranilate. CarC is specific for 2-hydroxy-6-oxo-6-phenylhexa-2,4-dienoic acid (6-phenyl-HODA), and has little activity toward 2-hydroxy-6-oxohepta-2,4-dienoic acid and 2-hydroxymuconic semialdehyde. The effect of the presence of an amino group or hydroxyl group at the 2'-position of phenyl moiety of 6-phenyl-HODA on the enzyme activity is found to be small. The chain is 2-hydroxy-6-oxo-6-(2'-aminophenyl)hexa-2,4-dienoic acid hydrolase (carC) from Metapseudomonas resinovorans (Pseudomonas resinovorans).